Reading from the N-terminus, the 520-residue chain is Anthranilate synthase component 1 (520 aa).

Residues Ser40 and Pro291 to Met293 each bind L-tryptophan. Gly328–Thr329 contributes to the chorismate binding site. Glu361 lines the Mg(2+) pocket. Chorismate contacts are provided by residues Tyr449, Arg469, Gly483–Gly485, and Gly485. Glu498 is a Mg(2+) binding site.

This sequence belongs to the anthranilate synthase component I family. In terms of assembly, heterotetramer consisting of two non-identical subunits: a beta subunit (TrpG) and a large lpha subunit (TrpE). Mg(2+) serves as cofactor.

It catalyses the reaction chorismate + L-glutamine = anthranilate + pyruvate + L-glutamate + H(+). It participates in amino-acid biosynthesis; L-tryptophan biosynthesis; L-tryptophan from chorismate: step 1/5. Cooperatively feedback inhibited by tryptophan. Functionally, part of a heterotetrameric complex that catalyzes the two-step biosynthesis of anthranilate, an intermediate in the biosynthesis of L-tryptophan. In the first step, the glutamine-binding beta subunit (TrpG) of anthranilate synthase (AS) provides the glutamine amidotransferase activity which generates ammonia as a substrate that, along with chorismate, is used in the second step, catalyzed by the large alpha subunit of AS (TrpE) to produce anthranilate. In the absence of TrpG, TrpE can synthesize anthranilate directly from chorismate and high concentrations of ammonia. This Escherichia coli (strain K12) protein is Anthranilate synthase component 1 (trpE).